Reading from the N-terminus, the 312-residue chain is Taste receptor type 2 member 9 (312 aa).

Residues 1 to 9 (MPSAIEAIY) are Extracellular-facing. A helical transmembrane segment spans residues 10–32 (IILIAGELTIGIWGNGFIVLVNC). The Cytoplasmic portion of the chain corresponds to 33–52 (IDWLKRRDVSLIDIILISLA). Residues 53 to 72 (ISRICLLXVISLDGFFMLLF) form a helical membrane-spanning segment. Over 73-86 (PTTYGNSVLVSIVB) the chain is Extracellular. Residues 87–109 (IVWTFANNSSLWFTSCLSIFYLL) form a helical membrane-spanning segment. Topologically, residues 110-128 (KIANISHPFFFWLKLKINK) are cytoplasmic. A helical membrane pass occupies residues 129–146 (VILAILLGSFLISLVISV). Over 147–180 (XMNDDMWYHLFKVSHEENITWEFKVSKIPGTFKQ) the chain is Extracellular. A glycan (N-linked (GlcNAc...) asparagine) is linked at Asn164. The helical transmembrane segment at 181–203 (LTLNLGAMVPFILCLISFSLLLF) threads the bilayer. The Cytoplasmic portion of the chain corresponds to 204–234 (SLVRHTKQIQLXATGFRDPSTEAHMRAIKAV). Residues 235–257 (IIFLLLLIVYYPVFLVMTSSALI) traverse the membrane as a helical segment. Residues 258–261 (PQGK) are Extracellular-facing. A helical transmembrane segment spans residues 262-284 (LVLMIGDIVTITFPSSHSFILIM). The Cytoplasmic portion of the chain corresponds to 285-312 (GNSKLREAFLKMLRFVKRFLRRRKPFVP).

It belongs to the G-protein coupled receptor T2R family.

The protein resides in the membrane. In terms of biological role, gustducin-coupled receptor implicated in the perception of bitter compounds in the oral cavity and the gastrointestinal tract. Signals through PLCB2 and the calcium-regulated cation channel TRPM5. This chain is Taste receptor type 2 member 9 (TAS2R9), found in Pongo pygmaeus (Bornean orangutan).